The following is a 605-amino-acid chain: DNA mismatch repair protein MutL (605 aa).

The protein belongs to the DNA mismatch repair MutL/HexB family.

This protein is involved in the repair of mismatches in DNA. It is required for dam-dependent methyl-directed DNA mismatch repair. May act as a 'molecular matchmaker', a protein that promotes the formation of a stable complex between two or more DNA-binding proteins in an ATP-dependent manner without itself being part of a final effector complex. The chain is DNA mismatch repair protein MutL from Exiguobacterium sp. (strain ATCC BAA-1283 / AT1b).